Here is a 237-residue protein sequence, read N- to C-terminus: Aspartate/glutamate leucyltransferase (237 aa).

The protein belongs to the R-transferase family. Bpt subfamily.

The protein localises to the cytoplasm. It carries out the reaction N-terminal L-glutamyl-[protein] + L-leucyl-tRNA(Leu) = N-terminal L-leucyl-L-glutamyl-[protein] + tRNA(Leu) + H(+). The catalysed reaction is N-terminal L-aspartyl-[protein] + L-leucyl-tRNA(Leu) = N-terminal L-leucyl-L-aspartyl-[protein] + tRNA(Leu) + H(+). Its function is as follows. Functions in the N-end rule pathway of protein degradation where it conjugates Leu from its aminoacyl-tRNA to the N-termini of proteins containing an N-terminal aspartate or glutamate. This Shewanella amazonensis (strain ATCC BAA-1098 / SB2B) protein is Aspartate/glutamate leucyltransferase.